The following is a 310-amino-acid chain: Transcription factor RAX3 (310 aa).

2 consecutive HTH myb-type domains span residues 9 to 62 (KANV…LNYL) and 63 to 117 (RPNI…KKKL). 2 DNA-binding regions (H-T-H motif) span residues 38-62 (WIALPQKIGLKRCGKSCRLRWLNYL) and 90-113 (WSIIAAQLPGRTDNDIKNYWNTRL).

As to expression, ubiquitous.

The protein resides in the nucleus. Functionally, transcription activator. Positively regulates axillary meristems (AMs) formation and development, especially during inflorescence. The chain is Transcription factor RAX3 (RAX3) from Arabidopsis thaliana (Mouse-ear cress).